Here is a 285-residue protein sequence, read N- to C-terminus: MAWFKRTQKGIQTPTEHKKDVPKGLWYKSPTGKIVDAEQLESNFYVSPEDGYHVRIGSNEYFKILFDDNKYKELDKGMTSKDPLDFEDTKKYTDRLKAAQEKTGLKDAVRCAVGKSKGNDLVIACMDFKFVGGSMGSVVGEKIARAADYALKNKLPFMIISKSGGARMQEAALSLMQLAKTSVKLAQLADAKIPYISLATDPTTGGTTASFAMLGDINISEPGALIGFAGPRVVKDTTGKDLPKDFQTSEFLKEKGFLDFITKRSELKNKINLYLDLIQNQPVRA.

The CoA carboxyltransferase N-terminal domain maps to 24–285 (GLWYKSPTGK…DLIQNQPVRA (262 aa)).

It belongs to the AccD/PCCB family. As to quaternary structure, acetyl-CoA carboxylase is a heterohexamer composed of biotin carboxyl carrier protein (AccB), biotin carboxylase (AccC) and two subunits each of ACCase subunit alpha (AccA) and ACCase subunit beta (AccD).

It is found in the cytoplasm. It catalyses the reaction N(6)-carboxybiotinyl-L-lysyl-[protein] + acetyl-CoA = N(6)-biotinyl-L-lysyl-[protein] + malonyl-CoA. Its pathway is lipid metabolism; malonyl-CoA biosynthesis; malonyl-CoA from acetyl-CoA: step 1/1. In terms of biological role, component of the acetyl coenzyme A carboxylase (ACC) complex. Biotin carboxylase (BC) catalyzes the carboxylation of biotin on its carrier protein (BCCP) and then the CO(2) group is transferred by the transcarboxylase to acetyl-CoA to form malonyl-CoA. This Christiangramia forsetii (strain DSM 17595 / CGMCC 1.15422 / KT0803) (Gramella forsetii) protein is Acetyl-coenzyme A carboxylase carboxyl transferase subunit beta.